A 401-amino-acid chain; its full sequence is L-rhamnonate dehydratase (401 aa).

2 residues coordinate substrate: His29 and Arg55. Asp222, Glu248, and Glu276 together coordinate Mg(2+). The active-site Proton acceptor is the His325. Glu345 provides a ligand contact to substrate.

This sequence belongs to the mandelate racemase/muconate lactonizing enzyme family. RhamD subfamily. As to quaternary structure, homooctamer; tetramer of dimers. It depends on Mg(2+) as a cofactor.

The catalysed reaction is L-rhamnonate = 2-dehydro-3-deoxy-L-rhamnonate + H2O. Catalyzes the dehydration of L-rhamnonate to 2-keto-3-deoxy-L-rhamnonate (KDR). Can also dehydrate L-lyxonate, L-mannonate and D-gulonate, although less efficiently, but not 2-keto-4-hydroxyheptane-1,7-dioate. The polypeptide is L-rhamnonate dehydratase (rhmD) (Escherichia coli (strain K12)).